A 553-amino-acid chain; its full sequence is Glycine betaine/proline/choline transporter VP1723 (553 aa).

Helical transmembrane passes span 43 to 63 (NRVF…TLTF), 85 to 105 (FFLA…VTPL), 122 to 142 (AGWL…FFGV), 191 to 211 (WALH…IFSF), 231 to 251 (VWGW…VFGL), 278 to 298 (TQVV…VAGL), 310 to 330 (MILA…MAIL), 362 to 382 (WTAF…MFIA), 393 to 413 (FIIC…TAFG), 443 to 463 (VMPF…VFFI), 490 to 510 (VFWC…GGLA), and 515 to 535 (MAVT…VSLI).

The protein belongs to the BCCT transporter (TC 2.A.15) family.

The protein localises to the cell inner membrane. In terms of biological role, involved in the uptake of osmoprotectants. Can transport glycine betaine, proline and choline. The protein is Glycine betaine/proline/choline transporter VP1723 of Vibrio parahaemolyticus serotype O3:K6 (strain RIMD 2210633).